A 307-amino-acid chain; its full sequence is D-alanine--D-alanine ligase (307 aa).

An ATP-grasp domain is found at 101 to 301; that stretch reads KTVMRAAGVD…FGELVRWMVE (201 aa). ATP is bound at residue 127–182; sequence PLPPPYVVKPIAEGSSVGVIIVRDGRSHPPQILASEEWTFGEQVLAEPYIAGRELT. Mg(2+) is bound by residues D251, E268, and N270.

The protein belongs to the D-alanine--D-alanine ligase family. Mg(2+) is required as a cofactor. It depends on Mn(2+) as a cofactor.

It is found in the cytoplasm. It catalyses the reaction 2 D-alanine + ATP = D-alanyl-D-alanine + ADP + phosphate + H(+). The protein operates within cell wall biogenesis; peptidoglycan biosynthesis. Cell wall formation. The protein is D-alanine--D-alanine ligase of Methylobacterium radiotolerans (strain ATCC 27329 / DSM 1819 / JCM 2831 / NBRC 15690 / NCIMB 10815 / 0-1).